An 86-amino-acid polypeptide reads, in one-letter code: Kappa-theraphotoxin-Cg1c (86 aa).

A signal peptide spans 1 to 21 (MKVSVLITLAVLGVMFVWASA). A propeptide spanning residues 22–50 (AELEERGSDHRDSPAWLKSMERIFQSEER) is cleaved from the precursor. 3 disulfides stabilise this stretch: cysteine 52–cysteine 66, cysteine 59–cysteine 71, and cysteine 65–cysteine 78.

The protein belongs to the neurotoxin 10 (Hwtx-1) family. 28 (Jztx-11) subfamily. In terms of tissue distribution, expressed by the venom gland.

It is found in the secreted. Its function is as follows. Probable ion channel inhibitor. The polypeptide is Kappa-theraphotoxin-Cg1c (Chilobrachys guangxiensis (Chinese earth tiger tarantula)).